The following is a 429-amino-acid chain: Zinc metalloproteinase nas-17 (429 aa).

Positions 1–21 (MFLRPSTLLLTLFLALVAGSA) are cleaved as a signal peptide. N-linked (GlcNAc...) asparagine glycosylation occurs at Asn-54. Residues 62–251 (RQITKIWKKW…VNINVRYSCG (190 aa)) enclose the Peptidase M12A domain. Cystine bridges form between Cys-104–Cys-250, Cys-125–Cys-144, Cys-252–Cys-272, and Cys-274–Cys-283. Position 152 (His-152) interacts with Zn(2+). Glu-153 is an active-site residue. His-156 and His-162 together coordinate Zn(2+). Positions 245-284 (NVRYSCGCAKSLTCENGGYTNPSNCATCVCPTGFAGTLCN) constitute an EGF-like domain.

Requires Zn(2+) as cofactor.

The protein localises to the secreted. Its function is as follows. Metalloprotease. In Caenorhabditis elegans, this protein is Zinc metalloproteinase nas-17 (nas-17).